Here is a 360-residue protein sequence, read N- to C-terminus: Mitogen-activated protein kinase 14 (360 aa).

Position 2 is an N-acetylserine (serine 2). At serine 2 the chain carries Phosphoserine. Threonine 16 carries the phosphothreonine modification. Residues 24–308 enclose the Protein kinase domain; the sequence is YQNLSPVGSG…AAQALAHAYF (285 aa). ATP is bound by residues 30–38 and lysine 53; that span reads VGSGAYGSV. Lysine 53 carries the N6-acetyllysine modification. The active-site Proton acceptor is aspartate 150. At lysine 152 the chain carries N6-acetyllysine. Threonine 180 is modified (phosphothreonine; by MAP2K3, MAP2K4, MAP2K6 and autocatalysis). Positions 180–182 match the TXY motif; it reads TGY. Tyrosine 182 is modified (phosphotyrosine; by MAP2K3, MAP2K4, MAP2K6 and autocatalysis). Residue threonine 263 is modified to Phosphothreonine. The residue at position 323 (tyrosine 323) is a Phosphotyrosine; by ZAP70.

Belongs to the protein kinase superfamily. CMGC Ser/Thr protein kinase family. MAP kinase subfamily. In terms of assembly, component of a signaling complex containing at least AKAP13, PKN1, MAPK14, ZAK and MAP2K3. Within this complex, AKAP13 interacts directly with PKN1, which in turn recruits MAPK14, MAP2K3 and ZAK. Binds to a kinase interaction motif within the protein tyrosine phosphatase, PTPRR. This interaction retains MAPK14 in the cytoplasm and prevents nuclear accumulation. Interacts with SPAG9 and GADD45A. Interacts with CDC25B, CDC25C, DUSP1, DUSP10, DUSP16, NP60, SUPT20H and TAB1. Interacts with casein kinase II subunits CSNK2A1 and CSNK2B. Interacts with PPM1D. Interacts with CDK5RAP3; recruits PPM1D to MAPK14 and may regulate its dephosphorylation. Interacts with DUSP2; this interaction does not lead to catalytic activation of DUSP2 and dephosphrylation of MAPK14. Requires Mg(2+) as cofactor. Post-translationally, dually phosphorylated on Thr-180 and Tyr-182 by the MAP2Ks MAP2K3/MKK3, MAP2K4/MKK4 and MAP2K6/MKK6 in response to inflammatory citokines, environmental stress or growth factors, which activates the enzyme. Dual phosphorylation can also be mediated by TAB1-mediated autophosphorylation. TCR engagement in T-cells also leads to Tyr-323 phosphorylation by ZAP70. Dephosphorylated and inactivated by DUPS1, DUSP10 and DUSP16. PPM1D also mediates dephosphorylation and inactivation of MAPK14. In terms of processing, acetylated at Lys-53 and Lys-152 by KAT2B and EP300. Acetylation at Lys-53 increases the affinity for ATP and enhances kinase activity. Lys-53 and Lys-152 are deacetylated by HDAC3. Ubiquitinated. Ubiquitination leads to degradation by the proteasome pathway.

It is found in the cytoplasm. The protein resides in the nucleus. It catalyses the reaction L-seryl-[protein] + ATP = O-phospho-L-seryl-[protein] + ADP + H(+). The enzyme catalyses L-threonyl-[protein] + ATP = O-phospho-L-threonyl-[protein] + ADP + H(+). Activated by cell stresses such as DNA damage, heat shock, osmotic shock, anisomycin and sodium arsenite, as well as pro-inflammatory stimuli such as bacterial lipopolysaccharide (LPS) and interleukin-1. Activation occurs through dual phosphorylation of Thr-180 and Tyr-182 by either of two dual specificity kinases, MAP2K3/MKK3 or MAP2K6/MKK6, and potentially also MAP2K4/MKK4, as well as by TAB1-mediated autophosphorylation. MAPK14 phosphorylated on both Thr-180 and Tyr-182 is 10-20-fold more active than MAPK14 phosphorylated only on Thr-180, whereas MAPK14 phosphorylated on Tyr-182 alone is inactive. whereas Thr-180 is necessary for catalysis, Tyr-182 may be required for auto-activation and substrate recognition. Phosphorylated at Tyr-323 by ZAP70 in an alternative activation pathway in response to TCR signaling in T-cells. This alternative pathway is inhibited by GADD45A. Inhibited by dual specificity phosphatases, such as DUSP1, DUSP10, and DUSP16. Specifically inhibited by the binding of pyridinyl-imidazole compounds, which are cytokine-suppressive anti-inflammatory drugs (CSAID). SB203580 is an inhibitor of MAPK14. Serine/threonine kinase which acts as an essential component of the MAP kinase signal transduction pathway. MAPK14 is one of the four p38 MAPKs which play an important role in the cascades of cellular responses evoked by extracellular stimuli such as pro-inflammatory cytokines or physical stress leading to direct activation of transcription factors. Accordingly, p38 MAPKs phosphorylate a broad range of proteins and it has been estimated that they may have approximately 200 to 300 substrates each. Some of the targets are downstream kinases which are activated through phosphorylation and further phosphorylate additional targets. RPS6KA5/MSK1 and RPS6KA4/MSK2 can directly phosphorylate and activate transcription factors such as CREB1, ATF1, the NF-kappa-B isoform RELA/NFKB3, STAT1 and STAT3, but can also phosphorylate histone H3 and the nucleosomal protein HMGN1. RPS6KA5/MSK1 and RPS6KA4/MSK2 play important roles in the rapid induction of immediate-early genes in response to stress or mitogenic stimuli, either by inducing chromatin remodeling or by recruiting the transcription machinery. On the other hand, two other kinase targets, MAPKAPK2/MK2 and MAPKAPK3/MK3, participate in the control of gene expression mostly at the post-transcriptional level, by phosphorylating ZFP36 (tristetraprolin) and ELAVL1, and by regulating EEF2K, which is important for the elongation of mRNA during translation. MKNK1/MNK1 and MKNK2/MNK2, two other kinases activated by p38 MAPKs, regulate protein synthesis by phosphorylating the initiation factor EIF4E2. MAPK14 also interacts with casein kinase II, leading to its activation through autophosphorylation and further phosphorylation of TP53/p53. In the cytoplasm, the p38 MAPK pathway is an important regulator of protein turnover. For example, CFLAR is an inhibitor of TNF-induced apoptosis whose proteasome-mediated degradation is regulated by p38 MAPK phosphorylation. In a similar way, MAPK14 phosphorylates the ubiquitin ligase SIAH2, regulating its activity towards EGLN3. MAPK14 may also inhibit the lysosomal degradation pathway of autophagy by interfering with the intracellular trafficking of the transmembrane protein ATG9. Another function of MAPK14 is to regulate the endocytosis of membrane receptors by different mechanisms that impinge on the small GTPase RAB5A. In addition, clathrin-mediated EGFR internalization induced by inflammatory cytokines and UV irradiation depends on MAPK14-mediated phosphorylation of EGFR itself as well as of RAB5A effectors. Ectodomain shedding of transmembrane proteins is regulated by p38 MAPKs as well. In response to inflammatory stimuli, p38 MAPKs phosphorylate the membrane-associated metalloprotease ADAM17. Such phosphorylation is required for ADAM17-mediated ectodomain shedding of TGF-alpha family ligands, which results in the activation of EGFR signaling and cell proliferation. Another p38 MAPK substrate is FGFR1. FGFR1 can be translocated from the extracellular space into the cytosol and nucleus of target cells, and regulates processes such as rRNA synthesis and cell growth. FGFR1 translocation requires p38 MAPK activation. In the nucleus, many transcription factors are phosphorylated and activated by p38 MAPKs in response to different stimuli. Classical examples include ATF1, ATF2, ATF6, ELK1, PTPRH, DDIT3, TP53/p53 and MEF2C and MEF2A. The p38 MAPKs are emerging as important modulators of gene expression by regulating chromatin modifiers and remodelers. The promoters of several genes involved in the inflammatory response, such as IL6, IL8 and IL12B, display a p38 MAPK-dependent enrichment of histone H3 phosphorylation on 'Ser-10' (H3S10ph) in LPS-stimulated myeloid cells. This phosphorylation enhances the accessibility of the cryptic NF-kappa-B-binding sites marking promoters for increased NF-kappa-B recruitment. Phosphorylates CDC25B and CDC25C which is required for binding to 14-3-3 proteins and leads to initiation of a G2 delay after ultraviolet radiation. Phosphorylates TIAR following DNA damage, releasing TIAR from GADD45A mRNA and preventing mRNA degradation. The p38 MAPKs may also have kinase-independent roles, which are thought to be due to the binding to targets in the absence of phosphorylation. Protein O-Glc-N-acylation catalyzed by the OGT is regulated by MAPK14, and, although OGT does not seem to be phosphorylated by MAPK14, their interaction increases upon MAPK14 activation induced by glucose deprivation. This interaction may regulate OGT activity by recruiting it to specific targets such as neurofilament H, stimulating its O-Glc-N-acylation. Required in mid-fetal development for the growth of embryo-derived blood vessels in the labyrinth layer of the placenta. Also plays an essential role in developmental and stress-induced erythropoiesis, through regulation of EPO gene expression. Phosphorylates S100A9 at 'Thr-113'. The protein is Mitogen-activated protein kinase 14 of Canis lupus familiaris (Dog).